We begin with the raw amino-acid sequence, 388 residues long: MKLSKRIENLPPYLFVQISKKIAEKRAKGEEVISFAIGDPDLPTPKHILAELCKAAEDPSNHRYPETEGLPVLRKAMAEWYQKRFGVKLNPDTEVLPLIGSKEGIGHAAWCFLDPGDIALVPNPAYPVYAISSQLAGAEVFNLPLNKGNNFLPNLEAIPQNILSKAKVLWINYPNNPTGAVAGLSFFQEVANFAAKHNLAVCHDGPYSEIAFDGYKPVSFLEADGAKDVGIEFHSLSKSYNMTGWRIGMAVGNAKMIDALRRFKSNLDSGIPQAIQLMAIAALNGSQEIINQNCAIYQRRRDRLVESLRNIGMEVTAPKASLYIWAPVPESYTSASFATELLDKTGVVVTPGTGYGTAGEGYIRLSLTVPDEQIEKGIAKLAGYKKSS.

Positions 13, 38, 102, 126, and 176 each coordinate substrate. Residues 101-102 (SK), Tyr-126, Asn-176, Tyr-207, and 235-237 (SLS) contribute to the pyridoxal 5'-phosphate site. The residue at position 238 (Lys-238) is an N6-(pyridoxal phosphate)lysine. Residue Arg-246 participates in pyridoxal 5'-phosphate binding. Substrate is bound at residue Arg-364.

Belongs to the class-I pyridoxal-phosphate-dependent aminotransferase family. LL-diaminopimelate aminotransferase subfamily. In terms of assembly, homodimer. It depends on pyridoxal 5'-phosphate as a cofactor.

It catalyses the reaction (2S,6S)-2,6-diaminopimelate + 2-oxoglutarate = (S)-2,3,4,5-tetrahydrodipicolinate + L-glutamate + H2O + H(+). Its pathway is amino-acid biosynthesis; L-lysine biosynthesis via DAP pathway; LL-2,6-diaminopimelate from (S)-tetrahydrodipicolinate (aminotransferase route): step 1/1. In terms of biological role, involved in the synthesis of meso-diaminopimelate (m-DAP or DL-DAP), required for both lysine and peptidoglycan biosynthesis. Catalyzes the direct conversion of tetrahydrodipicolinate to LL-diaminopimelate. The chain is LL-diaminopimelate aminotransferase from Dehalococcoides mccartyi (strain CBDB1).